The chain runs to 179 residues: Ribosome maturation factor RimM (179 aa).

A PRC barrel domain is found at 100–176 (KEEFHLLELI…FIIINPPNGL (77 aa)).

This sequence belongs to the RimM family. In terms of assembly, binds ribosomal protein uS19.

It is found in the cytoplasm. In terms of biological role, an accessory protein needed during the final step in the assembly of 30S ribosomal subunit, possibly for assembly of the head region. Essential for efficient processing of 16S rRNA. May be needed both before and after RbfA during the maturation of 16S rRNA. It has affinity for free ribosomal 30S subunits but not for 70S ribosomes. This Prochlorococcus marinus (strain MIT 9215) protein is Ribosome maturation factor RimM.